The chain runs to 247 residues: Uridylate kinase (247 aa).

15–18 (KLSG) is a binding site for ATP. Residues 23–28 (GDEGFG) are involved in allosteric activation by GTP. Gly-57 contacts UMP. ATP-binding residues include Gly-58 and Arg-62. Residues Asp-77 and 138-145 (TGNPFFTT) contribute to the UMP site. 3 residues coordinate ATP: Thr-165, Tyr-171, and Asp-174.

Belongs to the UMP kinase family. As to quaternary structure, homohexamer.

The protein localises to the cytoplasm. It catalyses the reaction UMP + ATP = UDP + ADP. It functions in the pathway pyrimidine metabolism; CTP biosynthesis via de novo pathway; UDP from UMP (UMPK route): step 1/1. Allosterically activated by GTP. Inhibited by UTP. Functionally, catalyzes the reversible phosphorylation of UMP to UDP. The polypeptide is Uridylate kinase (Colwellia psychrerythraea (strain 34H / ATCC BAA-681) (Vibrio psychroerythus)).